Reading from the N-terminus, the 404-residue chain is Cysteine desulfurase IscS (404 aa).

Residues 75 to 76 (AT), Asn-155, Gln-183, and 203 to 205 (SAH) contribute to the pyridoxal 5'-phosphate site. Lys-206 carries the N6-(pyridoxal phosphate)lysine modification. Residue Thr-243 coordinates pyridoxal 5'-phosphate. The active-site Cysteine persulfide intermediate is Cys-328. Position 328 (Cys-328) interacts with [2Fe-2S] cluster.

The protein belongs to the class-V pyridoxal-phosphate-dependent aminotransferase family. NifS/IscS subfamily. Homodimer. Forms a heterotetramer with IscU, interacts with other sulfur acceptors. The cofactor is pyridoxal 5'-phosphate.

It is found in the cytoplasm. It catalyses the reaction (sulfur carrier)-H + L-cysteine = (sulfur carrier)-SH + L-alanine. It functions in the pathway cofactor biosynthesis; iron-sulfur cluster biosynthesis. Its function is as follows. Master enzyme that delivers sulfur to a number of partners involved in Fe-S cluster assembly, tRNA modification or cofactor biosynthesis. Catalyzes the removal of elemental sulfur atoms from cysteine to produce alanine. Functions as a sulfur delivery protein for Fe-S cluster synthesis onto IscU, an Fe-S scaffold assembly protein, as well as other S acceptor proteins. The sequence is that of Cysteine desulfurase IscS from Vibrio cholerae serotype O1 (strain M66-2).